A 227-amino-acid polypeptide reads, in one-letter code: Enolase-phosphatase E1 (227 aa).

It belongs to the HAD-like hydrolase superfamily. MasA/MtnC family. In terms of assembly, monomer. Mg(2+) is required as a cofactor.

It carries out the reaction 5-methylsulfanyl-2,3-dioxopentyl phosphate + H2O = 1,2-dihydroxy-5-(methylsulfanyl)pent-1-en-3-one + phosphate. The protein operates within amino-acid biosynthesis; L-methionine biosynthesis via salvage pathway; L-methionine from S-methyl-5-thio-alpha-D-ribose 1-phosphate: step 3/6. It participates in amino-acid biosynthesis; L-methionine biosynthesis via salvage pathway; L-methionine from S-methyl-5-thio-alpha-D-ribose 1-phosphate: step 4/6. Bifunctional enzyme that catalyzes the enolization of 2,3-diketo-5-methylthiopentyl-1-phosphate (DK-MTP-1-P) into the intermediate 2-hydroxy-3-keto-5-methylthiopentenyl-1-phosphate (HK-MTPenyl-1-P), which is then dephosphorylated to form the acireductone 1,2-dihydroxy-3-keto-5-methylthiopentene (DHK-MTPene). This Pseudomonas syringae pv. tomato (strain ATCC BAA-871 / DC3000) protein is Enolase-phosphatase E1.